The sequence spans 514 residues: Membrane-bound lytic murein transglycosylase F (514 aa).

Residues 1-30 (MKKLKINYLFIGILTLLLAAALWPSIPWFG) form the signal peptide. A non-LT domain region spans residues 31-269 (KTENHIAAIQ…RIEEKYLGHG (239 aa)). The segment at 270 to 514 (DDFDYVDTRS…LFTPQKKEEK (245 aa)) is LT domain. Glutamate 314 is a catalytic residue.

The protein in the N-terminal section; belongs to the bacterial solute-binding protein 3 family. In the C-terminal section; belongs to the transglycosylase Slt family.

It localises to the cell outer membrane. It carries out the reaction Exolytic cleavage of the (1-&gt;4)-beta-glycosidic linkage between N-acetylmuramic acid (MurNAc) and N-acetylglucosamine (GlcNAc) residues in peptidoglycan, from either the reducing or the non-reducing ends of the peptidoglycan chains, with concomitant formation of a 1,6-anhydrobond in the MurNAc residue.. In terms of biological role, murein-degrading enzyme that degrades murein glycan strands and insoluble, high-molecular weight murein sacculi, with the concomitant formation of a 1,6-anhydromuramoyl product. Lytic transglycosylases (LTs) play an integral role in the metabolism of the peptidoglycan (PG) sacculus. Their lytic action creates space within the PG sacculus to allow for its expansion as well as for the insertion of various structures such as secretion systems and flagella. This is Membrane-bound lytic murein transglycosylase F from Salmonella typhimurium (strain LT2 / SGSC1412 / ATCC 700720).